Consider the following 250-residue polypeptide: Bacteriorhodopsin (250 aa).

The Extracellular segment spans residues 1–18 (MCCAALAPPMAATVGPES). A helical membrane pass occupies residues 19 to 37 (IWLWIGTIGMTLGTLYFVG). Residues 38-51 (RGRGVRDRKMQEFY) lie on the Cytoplasmic side of the membrane. A helical transmembrane segment spans residues 52 to 70 (IITIFITTIAAAMYFAMAT). At 71–86 (GFGVTEVMVGDEALTI) the chain is on the extracellular side. A helical membrane pass occupies residues 87–104 (YWARYADWLFTTPLLLLD). The Cytoplasmic portion of the chain corresponds to 105–115 (LSLLAGANRNT). Residues 116 to 135 (IATLIGLDVFMIGTGAIAAL) form a helical membrane-spanning segment. At 136–142 (SSTPGTR) the chain is on the extracellular side. A helical membrane pass occupies residues 143-162 (IAWWAISTGALLALLYVLVG). Residues 163 to 180 (TLSENARNRAPEVASLFG) are Cytoplasmic-facing. A helical transmembrane segment spans residues 181–199 (RLRNLVIALWFLYPVVWIL). Over 200–212 (GTEGTFGILPLYW) the chain is Extracellular. A helical transmembrane segment spans residues 213 to 232 (ETAAFMVLDLSAKVGFGVIL). Position 225 is an N6-(retinylidene)lysine (Lys225). Topologically, residues 233 to 250 (LQSRSVLERVATPTAAPT) are cytoplasmic.

Belongs to the archaeal/bacterial/fungal opsin family.

It localises to the cell membrane. Light-driven proton pump. In Haloterrigena sp. (strain arg-4), this protein is Bacteriorhodopsin (bop).